Consider the following 299-residue polypeptide: UTP--glucose-1-phosphate uridylyltransferase (299 aa).

Belongs to the UDPGP type 2 family.

The enzyme catalyses alpha-D-glucose 1-phosphate + UTP + H(+) = UDP-alpha-D-glucose + diphosphate. It functions in the pathway carbohydrate metabolism; nucleotide-sugar metabolism. It participates in capsule biogenesis; capsule polysaccharide biosynthesis. The polypeptide is UTP--glucose-1-phosphate uridylyltransferase (cap4C) (Streptococcus pneumoniae serotype 4 (strain ATCC BAA-334 / TIGR4)).